A 431-amino-acid chain; its full sequence is tRNA (adenine(37)-N6)-methyltransferase (431 aa).

Residues 30–168 (TEPIGYLESC…YIADYDSPQN (139 aa)) enclose the TsaA-like domain. S-adenosyl-L-methionine-binding positions include 47-49 (PRQ), 90-91 (HK), Arg117, Leu127, and 148-151 (IDGT). The interval 196–242 (LSGRGKVQPRQSTKERPKCLEDRTSGENSQKSRDMSEIQHTLPEDRE) is disordered. Residues 207–242 (STKERPKCLEDRTSGENSQKSRDMSEIQHTLPEDRE) show a composition bias toward basic and acidic residues.

Belongs to the tRNA methyltransferase O family.

The enzyme catalyses N(6)-L-threonylcarbamoyladenosine(37) in tRNA + S-adenosyl-L-methionine = N(6)-methyl,N(6)-L-threonylcarbamoyladenosine(37) in tRNA + S-adenosyl-L-homocysteine + H(+). S-adenosyl-L-methionine-dependent methyltransferase responsible for the addition of the methyl group in the formation of N6-methyl-N6-threonylcarbamoyladenosine at position 37 (m(6)t(6)A37) of the tRNA anticodon loop of tRNA(Ser)(GCU). The methyl group of m(6)t(6)A37 may improve the efficiency of the tRNA decoding ability. May bind to tRNA. The chain is tRNA (adenine(37)-N6)-methyltransferase from Mus musculus (Mouse).